Here is a 256-residue protein sequence, read N- to C-terminus: UPF0259 membrane protein YPO2199/y2042/YP_1997 (256 aa).

Transmembrane regions (helical) follow at residues 20 to 40 (IAAI…LNQT), 90 to 110 (FSAL…IAMV), 118 to 138 (ALQA…LMFI), 141 to 161 (LVIQ…AIAL), 192 to 212 (LIVP…FLIS), and 221 to 241 (IATI…LVYL).

The protein belongs to the UPF0259 family.

It localises to the cell inner membrane. This is UPF0259 membrane protein YPO2199/y2042/YP_1997 from Yersinia pestis.